A 512-amino-acid chain; its full sequence is Sodium-dependent phosphate transport protein 1, chloroplastic (512 aa).

The transit peptide at 1–59 (MNARALLCSSNIHSLYTSNRPPEKTSSSRSLRNLKPSPKSLRVWIYPRNRSSVFRVLVR) directs the protein to the chloroplast. The next 11 helical transmembrane spans lie at 103 to 123 (WVIV…RVNM), 141 to 161 (VGLI…AGGI), 171 to 191 (VLGF…VAAK), 192 to 212 (LGLP…GVAM), 234 to 254 (LVYS…PFLI), 257 to 277 (FGWP…LTLW), 323 to 343 (VWAL…LLTW), 361 to 381 (LLSV…GWIA), 401 to 421 (IGFL…SPTM), 453 to 473 (GVLL…GTAA), and 486 to 506 (VFTI…LFST).

Belongs to the major facilitator superfamily. Sodium/anion cotransporter (TC 2.A.1.14) family. Expressed in flower buds, sepals of mature flowers and mature leaves, less in senescent leaves and at low levels in roots.

The protein localises to the plastid. Its subcellular location is the chloroplast thylakoid membrane. Functionally, specific for inorganic phosphate transport across the thylakoid membrane in a sodium dependent manner. Binds glutamate but cannot transport it. May act as an ascorbate transporter at the thylakoid membrane. The polypeptide is Sodium-dependent phosphate transport protein 1, chloroplastic (ANTR1) (Arabidopsis thaliana (Mouse-ear cress)).